A 188-amino-acid polypeptide reads, in one-letter code: UPF0200 protein YG5714_1176 (188 aa).

15-22 (GMPGSGKS) lines the ATP pocket.

This sequence belongs to the UPF0200 family.

This is UPF0200 protein YG5714_1176 from Saccharolobus islandicus (strain Y.G.57.14 / Yellowstone #1) (Sulfolobus islandicus).